Reading from the N-terminus, the 489-residue chain is Ubiquitin-like-specific protease ESD4 (489 aa).

The disordered stretch occupies residues 43–66 (AMSEDSGKPASSNPTISRISRYPD). A compositionally biased stretch (polar residues) spans 51-60 (PASSNPTISR). Positions 200–223 (ASSLEAYRKLMQSAEKRNSKLEAL) form a coiled coil. Active-site residues include His-380, Asp-397, and Cys-448.

The protein belongs to the peptidase C48 family. Interacts with NUA (via N-terminus). Interacts with KIN10. As to expression, expressed in seedlings, leaves, shoots, flowers and roots.

Its subcellular location is the nucleus membrane. It carries out the reaction Hydrolysis of the alpha-linked peptide bond in the sequence Gly-Gly-|-Ala-Thr-Tyr at the C-terminal end of the small ubiquitin-like modifier (SUMO) propeptide, Smt3, leading to the mature form of the protein. A second reaction involves the cleavage of an epsilon-linked peptide bond between the C-terminal glycine of the mature SUMO and the lysine epsilon-amino group of the target protein.. Inhibited by thiol reagent and N-ethylmaleimide, but not by ubiquitin aldehyde, pepstatin A or benzamidine HCl. Functionally, protease that catalyzes two essential functions in the SUMO pathway: processing of full-length SUMOs to their mature forms and deconjugation of SUMO from targeted proteins. Cleaves precursors of SUM1 and SUM2, but not of SUM3 or SUM5. Able to release SUM1 and SUM2 from conjugates, but unable to cleave SUM3. Acts predominantly as an isopeptidase, cleaving SUMO-conjugated proteins better than SUMO peptides. Plays an important role in the control of flowering time. The polypeptide is Ubiquitin-like-specific protease ESD4 (ESD4) (Arabidopsis thaliana (Mouse-ear cress)).